The chain runs to 329 residues: MATYGNETVDNYLYSSYNPYYYKYPKFKGWRQKAYFTNYGEGETYFDNHHRAQLKSILSQINPNLTPRLRKANTKDVGVQVNPKTDASIQCSLGPRTLLARKRDALRRRRQEVQTPGSPVSSGGVRFPRTQAVYSPVESRRLVSLFREEGEEEEDTDLEVTETVDSAEKLESAEKNVRKQGKKSAKQPLSPEKNINKQTETNEENTNEPVKTEQDDLKSKARVRFQSLEQKYGFYHCKDCNLRWESAYVWCVQGTNKVYFKQFCRTCQKSFNPYRVEDIACQTCKKARCTCSVKSRHVDPKRPHRQDLCGRCKGKRLSCDSTFSFKYII.

2 disordered regions span residues 106 to 132 (LRRRRQEVQTPGSPVSSGGVRFPRTQA) and 146 to 218 (FREE…DDLK). Acidic residues predominate over residues 149 to 162 (EGEEEEDTDLEVTE). Positions 166 to 177 (SAEKLESAEKNV) are enriched in basic and acidic residues. A 3CxxC-type zinc finger spans residues 231 to 314 (KYGFYHCKDC…RQDLCGRCKG (84 aa)).

The protein belongs to the ZAR1 family. In terms of tissue distribution, specifically expressed in ovaries but absent in testes.

It localises to the cytoplasm. It is found in the cytoplasmic ribonucleoprotein granule. MRNA-binding protein required for maternal mRNA storage, translation and degradation during oocyte maturation. Probably promotes formation of some phase-separated membraneless compartment that stores maternal mRNAs in oocytes: acts by undergoing liquid-liquid phase separation upon binding to maternal mRNAs. Binds to the 3'-UTR of zona pellucida mRNAs, inhibiting their translation. The chain is Zygote arrest protein 1 from Danio rerio (Zebrafish).